Consider the following 524-residue polypeptide: Bifunctional purine biosynthesis protein PurH (524 aa).

An MGS-like domain is found at 1–145 (MIQQALLSVS…KNHRDVTVIV (145 aa)).

The protein belongs to the PurH family.

It carries out the reaction (6R)-10-formyltetrahydrofolate + 5-amino-1-(5-phospho-beta-D-ribosyl)imidazole-4-carboxamide = 5-formamido-1-(5-phospho-D-ribosyl)imidazole-4-carboxamide + (6S)-5,6,7,8-tetrahydrofolate. The enzyme catalyses IMP + H2O = 5-formamido-1-(5-phospho-D-ribosyl)imidazole-4-carboxamide. Its pathway is purine metabolism; IMP biosynthesis via de novo pathway; 5-formamido-1-(5-phospho-D-ribosyl)imidazole-4-carboxamide from 5-amino-1-(5-phospho-D-ribosyl)imidazole-4-carboxamide (10-formyl THF route): step 1/1. It functions in the pathway purine metabolism; IMP biosynthesis via de novo pathway; IMP from 5-formamido-1-(5-phospho-D-ribosyl)imidazole-4-carboxamide: step 1/1. The sequence is that of Bifunctional purine biosynthesis protein PurH from Ralstonia pickettii (strain 12J).